A 44-amino-acid chain; its full sequence is Large ribosomal subunit protein bL34 (44 aa).

Belongs to the bacterial ribosomal protein bL34 family.

The polypeptide is Large ribosomal subunit protein bL34 (Wolbachia pipientis wMel).